A 93-amino-acid polypeptide reads, in one-letter code: Small ribosomal subunit protein uS19 (93 aa).

The protein belongs to the universal ribosomal protein uS19 family.

In terms of biological role, protein S19 forms a complex with S13 that binds strongly to the 16S ribosomal RNA. The protein is Small ribosomal subunit protein uS19 of Streptococcus gordonii (strain Challis / ATCC 35105 / BCRC 15272 / CH1 / DL1 / V288).